The primary structure comprises 321 residues: D-alanine--D-alanine ligase (321 aa).

An ATP-grasp domain is found at 121–315 (RIWFLTNNIN…FTNLIEEIIK (195 aa)). An ATP-binding site is contributed by 147-199 (PMKRPYVIKPLTQGSSIGVEVIFAEDDFNFADYDFPYGDQVIIEQYIKGRELQ). Mg(2+) contacts are provided by glutamate 268, glutamate 282, and asparagine 284.

Belongs to the D-alanine--D-alanine ligase family. Requires Mg(2+) as cofactor. It depends on Mn(2+) as a cofactor.

Its subcellular location is the cytoplasm. The catalysed reaction is 2 D-alanine + ATP = D-alanyl-D-alanine + ADP + phosphate + H(+). The protein operates within cell wall biogenesis; peptidoglycan biosynthesis. Cell wall formation. The protein is D-alanine--D-alanine ligase of Rickettsia africae (strain ESF-5).